Consider the following 116-residue polypeptide: MESPRLRLLPLLGAALLLLLPLLGALAQEDAELQPRALDIYSAVEDASHEKELIEALQEVLKKLKSKRIPIYEKKYGQVPMCDAGEQCAVRKGARIGKLCDCPRGTSCNSFLLKCL.

The signal sequence occupies residues 1-27 (MESPRLRLLPLLGAALLLLLPLLGALA). Position 41 is a phosphotyrosine (Y41). Position 48 is a phosphoserine (S48). 3 disulfide bridges follow: C82-C100, C88-C108, and C102-C115.

The protein belongs to the CART family.

It localises to the secreted. Functionally, satiety factor closely associated with the actions of leptin and neuropeptide y; this anorectic peptide inhibits both normal and starvation-induced feeding and completely blocks the feeding response induced by neuropeptide Y and regulated by leptin in the hypothalamus. The polypeptide is Cocaine- and amphetamine-regulated transcript protein (CARTPT) (Bos taurus (Bovine)).